A 309-amino-acid polypeptide reads, in one-letter code: Homoserine kinase (309 aa).

ATP is bound at residue 91–101; that stretch reads PIGSGLGSSAC.

Belongs to the GHMP kinase family. Homoserine kinase subfamily.

It localises to the cytoplasm. The enzyme catalyses L-homoserine + ATP = O-phospho-L-homoserine + ADP + H(+). It functions in the pathway amino-acid biosynthesis; L-threonine biosynthesis; L-threonine from L-aspartate: step 4/5. Its function is as follows. Catalyzes the ATP-dependent phosphorylation of L-homoserine to L-homoserine phosphate. This chain is Homoserine kinase, found in Salmonella paratyphi B (strain ATCC BAA-1250 / SPB7).